The primary structure comprises 527 residues: MTQQAAEVAKRRTFAIISHPDAGKTTITEKLLLMGKAIAVAGTVKSRKSDRHATSDWMEMEKQRGISITTSVMQFPYREHMINLLDTPGHEDFSEDTYRTLTAVDSALMVLDGGKGVEPRTIALMDVCRLRDTPIVSFINKLDRDIRDPIELLDEIEAVLKIKAAPITWPIGCYRDFKGVYHLAGDYIIVYTPGHGHERTETKIIEKLDSAEARAHLGDEYERFIEQLELVQGACHEFNQQEFLDGQLTPVFFGTALGNFGVDHVLDAVVDWAPLPLARVANERSVAPQEEKFSGFIFKIQANMDPKHRDRIAFMRICSGKYEKGMKMRHVRTGKDVRIGDALTFFSSEREQLEEAYAGDIIGLHNHGTIQIGDTFTEGEALGFTGIPHFAPELFRRVRLKDPLKSKQLRQGLQQLAEEGATQVFFPERSNDIILGAVGVLQFDVVASRLKEEYKVECSYEPITVWSARWIECSDKKKLEEFSNKAVENLALDGGGHLTYLAPTRVNLALMEERWPDVKFRATREHH.

The 269-residue stretch at 9–277 folds into the tr-type G domain; sequence AKRRTFAIIS…AVVDWAPLPL (269 aa). GTP-binding positions include 18 to 25, 86 to 90, and 140 to 143; these read SHPDAGKT, DTPGH, and NKLD.

This sequence belongs to the TRAFAC class translation factor GTPase superfamily. Classic translation factor GTPase family. PrfC subfamily.

It localises to the cytoplasm. Its function is as follows. Increases the formation of ribosomal termination complexes and stimulates activities of RF-1 and RF-2. It binds guanine nucleotides and has strong preference for UGA stop codons. It may interact directly with the ribosome. The stimulation of RF-1 and RF-2 is significantly reduced by GTP and GDP, but not by GMP. In Pseudomonas fluorescens (strain ATCC BAA-477 / NRRL B-23932 / Pf-5), this protein is Peptide chain release factor 3.